Consider the following 419-residue polypeptide: ADIPOR-like receptor IZH3 (419 aa).

A disordered region spans residues 1–65 (MSHPNTHMPR…GEAGGGRSVL (65 aa)). The Lumenal portion of the chain corresponds to 1–147 (MSHPNTHMPR…LNAYGWHNET (147 aa)). A glycan (N-linked (GlcNAc...) asparagine) is linked at N145. The chain crosses the membrane as a helical span at residues 148–168 (INIWSHLVGAAVLAYLLCWGW). At 169 to 184 (PRSDVYRAAQVPRLAK) the chain is on the cytoplasmic side. The helical transmembrane segment at 185–205 (WAIGAFLACGVKCMASSVAWH) threads the bilayer. The Lumenal portion of the chain corresponds to 206-225 (TFNGTCHLKLRSRFVCVDYT). An N-linked (GlcNAc...) asparagine glycan is attached at N208. The chain crosses the membrane as a helical span at residues 226-246 (GITLLVTASVVTTVAVTLYGL). Residues 247–249 (SRP) are Cytoplasmic-facing. The helical transmembrane segment at 250–270 (LMYAYMVASIGLGTAAGVMNW) threads the bilayer. Residues 271–283 (SPHFDRPEARPLR) are Lumenal-facing. A helical transmembrane segment spans residues 284–304 (IAVYVGLAALGLVSFVHVWMQ). At 305–311 (VRWASAH) the chain is on the cytoplasmic side. A helical transmembrane segment spans residues 312-332 (LMAPLVYKSLVWYGIGVVFYA). At 333-377 (TLVPERWRSDVTLDCCSGPVHEAACRQFRDLPPVARKDRQFWSLW) the chain is on the lumenal side. A helical membrane pass occupies residues 378–398 (WVDYFCHSHFLWHVFVVLGVV). The Cytoplasmic segment spans residues 399–419 (GHYRAVLQMSRIVWLDAGRAF).

The protein belongs to the ADIPOR family.

It localises to the endoplasmic reticulum membrane. In terms of biological role, ADIPOR-like receptor involved in zinc metabolism either by altering membrane sterol content or by directly altering cellular zinc levels. The chain is ADIPOR-like receptor IZH3 (IZH3) from Eremothecium gossypii (strain ATCC 10895 / CBS 109.51 / FGSC 9923 / NRRL Y-1056) (Yeast).